The following is a 200-amino-acid chain: Large ribosomal subunit protein uL4 (200 aa).

Residues 38-68 are disordered; that stretch reads GRQGSKQQKTRSDVRGGGKRPWRQKGTGRAR. The span at 54–65 shows a compositional bias: basic residues; the sequence is GGKRPWRQKGTG.

Belongs to the universal ribosomal protein uL4 family. As to quaternary structure, part of the 50S ribosomal subunit.

Its function is as follows. One of the primary rRNA binding proteins, this protein initially binds near the 5'-end of the 23S rRNA. It is important during the early stages of 50S assembly. It makes multiple contacts with different domains of the 23S rRNA in the assembled 50S subunit and ribosome. In terms of biological role, forms part of the polypeptide exit tunnel. The polypeptide is Large ribosomal subunit protein uL4 (Pseudomonas fluorescens (strain SBW25)).